The primary structure comprises 181 residues: Adenylate kinase (181 aa).

10–15 (GAGKGT) is an ATP binding site. The NMP stretch occupies residues 30-59 (STGELFRSNIENGTKLGLEAKRYLDAGDLV). AMP-binding positions include Thr-31, Arg-36, 57–59 (DLV), 85–88 (GFPR), and Gln-92. An LID region spans residues 126 to 132 (ARGRADD). An ATP-binding site is contributed by Arg-127. Positions 129 and 140 each coordinate AMP. Gly-166 provides a ligand contact to ATP.

The protein belongs to the adenylate kinase family. Monomer.

The protein localises to the cytoplasm. The enzyme catalyses AMP + ATP = 2 ADP. It participates in purine metabolism; AMP biosynthesis via salvage pathway; AMP from ADP: step 1/1. Catalyzes the reversible transfer of the terminal phosphate group between ATP and AMP. Plays an important role in cellular energy homeostasis and in adenine nucleotide metabolism. This is Adenylate kinase from Mycolicibacterium paratuberculosis (strain ATCC BAA-968 / K-10) (Mycobacterium paratuberculosis).